The chain runs to 388 residues: Succinate--CoA ligase [ADP-forming] subunit beta (388 aa).

An ATP-grasp domain is found at Lys-9 to His-244. Residues Lys-46, Gly-53 to Gly-55, Glu-99, Thr-102, and Glu-107 each bind ATP. Mg(2+)-binding residues include Asn-199 and Asp-213. Substrate-binding positions include Asn-264 and Gly-321 to Val-323.

It belongs to the succinate/malate CoA ligase beta subunit family. In terms of assembly, heterotetramer of two alpha and two beta subunits. Mg(2+) serves as cofactor.

The catalysed reaction is succinate + ATP + CoA = succinyl-CoA + ADP + phosphate. It carries out the reaction GTP + succinate + CoA = succinyl-CoA + GDP + phosphate. It participates in carbohydrate metabolism; tricarboxylic acid cycle; succinate from succinyl-CoA (ligase route): step 1/1. Succinyl-CoA synthetase functions in the citric acid cycle (TCA), coupling the hydrolysis of succinyl-CoA to the synthesis of either ATP or GTP and thus represents the only step of substrate-level phosphorylation in the TCA. The beta subunit provides nucleotide specificity of the enzyme and binds the substrate succinate, while the binding sites for coenzyme A and phosphate are found in the alpha subunit. This Shewanella loihica (strain ATCC BAA-1088 / PV-4) protein is Succinate--CoA ligase [ADP-forming] subunit beta.